We begin with the raw amino-acid sequence, 75 residues long: MKELVEIIAKSLVDKPEDVHVNEVLGEESIILELKVSPEDMGKVIGKQGRIAKAIRTVVKAAAIKENKKVVVEII.

The 47-residue stretch at 29 to 75 (SIILELKVSPEDMGKVIGKQGRIAKAIRTVVKAAAIKENKKVVVEII) folds into the KH domain.

The protein belongs to the KhpA RNA-binding protein family. As to quaternary structure, forms a complex with KhpB.

Its subcellular location is the cytoplasm. In terms of biological role, a probable RNA chaperone. Forms a complex with KhpB which binds to cellular RNA and controls its expression. Plays a role in peptidoglycan (PG) homeostasis and cell length regulation. This chain is RNA-binding protein KhpA, found in Clostridium perfringens (strain 13 / Type A).